Reading from the N-terminus, the 1096-residue chain is DNA-directed RNA polymerase subunit beta (1096 aa).

The interval 1070–1096 (LMQDVNPRRSTPSRPTYESLGSDYQED) is disordered.

The protein belongs to the RNA polymerase beta chain family. In cyanobacteria the RNAP catalytic core is composed of 2 alpha, 1 beta, 1 beta', 1 gamma and 1 omega subunit. When a sigma factor is associated with the core the holoenzyme is formed, which can initiate transcription.

The catalysed reaction is RNA(n) + a ribonucleoside 5'-triphosphate = RNA(n+1) + diphosphate. Functionally, DNA-dependent RNA polymerase catalyzes the transcription of DNA into RNA using the four ribonucleoside triphosphates as substrates. The polypeptide is DNA-directed RNA polymerase subunit beta (Prochlorococcus marinus (strain MIT 9211)).